The sequence spans 222 residues: 3,4-dihydroxy-2-butanone 4-phosphate synthase (222 aa).

D-ribulose 5-phosphate is bound by residues 37–38, D42, 150–154, and E174; these read RE and RPGHT. E38 serves as a coordination point for Mg(2+). H153 is a binding site for Mg(2+).

It belongs to the DHBP synthase family. Homodimer. Requires Mg(2+) as cofactor. It depends on Mn(2+) as a cofactor.

It catalyses the reaction D-ribulose 5-phosphate = (2S)-2-hydroxy-3-oxobutyl phosphate + formate + H(+). The protein operates within cofactor biosynthesis; riboflavin biosynthesis; 2-hydroxy-3-oxobutyl phosphate from D-ribulose 5-phosphate: step 1/1. Catalyzes the conversion of D-ribulose 5-phosphate to formate and 3,4-dihydroxy-2-butanone 4-phosphate. This chain is 3,4-dihydroxy-2-butanone 4-phosphate synthase, found in Chlorobium limicola (strain DSM 245 / NBRC 103803 / 6330).